We begin with the raw amino-acid sequence, 943 residues long: uncharacterized protein (943 aa).

An N-acetylmethionine modification is found at methionine 1. 5 disordered regions span residues 37–63 (DETP…QQQQ), 152–177 (KHQF…DDEV), 315–381 (LPMN…QQLQ), 397–472 (QNVP…PLKK), and 515–546 (EREA…ESDD). Residues 41–58 (ISRNGNDSNINIQPSSVP) are compositionally biased toward polar residues. The span at 152 to 162 (KHQFGKSKKNT) shows a compositional bias: basic residues. Residues 318-358 (NNYNNHPGQFQNTPPVMPSGQQPPQQPRTLSLTNGPRYSPQ) are compositionally biased toward polar residues. Residues 367–381 (QQISQRQQQQQQQLQ) show a composition bias toward low complexity. A compositionally biased stretch (polar residues) spans 397–409 (QNVPQGFNPWSPN). The span at 417–433 (SMKQPISQSSISSKNNS) shows a compositional bias: low complexity. Residues 434–470 (AYSIPNVQNNSLTTFSPSSPTDATAMPNSTKQGSSPL) show a composition bias toward polar residues. Basic and acidic residues predominate over residues 515–533 (EREALVEEKEKERAEKNTE). Phosphoserine occurs at positions 553, 586, and 619. The interval 616 to 639 (EFPSPGKYNSNSDNGEMNTTNEVD) is disordered. Residues 622–639 (KYNSNSDNGEMNTTNEVD) are compositionally biased toward polar residues. A Phosphoserine modification is found at serine 649. A disordered region spans residues 654–683 (IPERDPKRNVSDATIKRRESDGNGRRLSNV). Residues 655–677 (PERDPKRNVSDATIKRRESDGNG) show a composition bias toward basic and acidic residues. Serine 681, serine 766, and serine 771 each carry phosphoserine.

This is an uncharacterized protein from Saccharomyces cerevisiae (strain ATCC 204508 / S288c) (Baker's yeast).